Consider the following 879-residue polypeptide: MKKLNSSEFRQMFLDFFKEHGHMIMPSASLIPQDDPTLLWINSGVATMKKYFDGSVVPKNRRITSSQKSIRTNDIENVGKTARHQTFFEMLGNFSVGDYFRDEAIPWAWEFLTSPKWLGLPKEKLYCTVYPKDEDSFNVWVKAGMPADHIVKLEDNFWDIGEGPCGPDTEIFYDRGQENNDVAEDDPENFPGGENARYLEIWNIVFSQYNHLPNGKYVDQPHKNIDTGMGLERVLSILQDAPTNFETDLFLPIIHATEEMTDGKKYGENDEDTTAFKIIADHVRAVSFAIADGALPSNSGRGYVLRRLIRRADLNGQRLGIKGAFLYKLVPVVGKIMESHYPEIMDQRGFIENVIQNEEERFQSTLDTGLTLLDDLIEKAKNSDDKTISGKDAFKMFDTYGFPYELTFESAQDAGLKVDKKGFDAEMQAQKDRARKARGDLQSMGRQDVTLMNIKDKSEFEYGVYEEPHAKLIDIVVDDKLVDKANGEHATLVFDKTPFYAERGGQVADHGGIYNQDGELVAKVTDVQHAPNDQNLHFVDLILPMEKGQEYVLKIDKERREGLRHSHSATHLLHAALRQVLGEHTHQAGSLVDPDYLRFDFTAMEPMTPRELKSVEELVNQKIWDAIQVKTTITTPEEGEKMGALALFDGKYGDKVRVVQMSDFSSEFCGGTHVDNTDQIGIFKITSESAVGAGMRRIEAVTSKKAYEYLANRSSLLDDIQEVVKATKPENIVDKIDSIENELRDSQKQVEALTKKINQAKAGEIFDNVKQAGDLTVIAAIADVNGMNDLRELADNWKSGNKSDVLVLAAENDGKANMIISLDQRALDKGLKAGDLIKKAAPLFGGGGGGRPNMAQAGGKKPEGLNDAIKAVIDEISNN.

Zn(2+) is bound by residues histidine 567, histidine 571, cysteine 669, and histidine 673.

The protein belongs to the class-II aminoacyl-tRNA synthetase family. It depends on Zn(2+) as a cofactor.

The protein localises to the cytoplasm. The catalysed reaction is tRNA(Ala) + L-alanine + ATP = L-alanyl-tRNA(Ala) + AMP + diphosphate. Catalyzes the attachment of alanine to tRNA(Ala) in a two-step reaction: alanine is first activated by ATP to form Ala-AMP and then transferred to the acceptor end of tRNA(Ala). Also edits incorrectly charged Ser-tRNA(Ala) and Gly-tRNA(Ala) via its editing domain. The chain is Alanine--tRNA ligase from Lactobacillus acidophilus (strain ATCC 700396 / NCK56 / N2 / NCFM).